Here is a 251-residue protein sequence, read N- to C-terminus: uncharacterized protein (251 aa).

The interval 207 to 251 is disordered; it reads ATPHSKRGRTKLYRKEPPGDNRSPPPWQEPHGEGLAEKLSPGPAR.

This is an uncharacterized protein from Treponema pallidum (strain Nichols).